A 130-amino-acid polypeptide reads, in one-letter code: Small ribosomal subunit protein uS9 (130 aa).

A disordered region spans residues 102–130 (GFLTRDPRMKERKKYGLKKARRSPQFSKR). Basic residues predominate over residues 111–130 (KERKKYGLKKARRSPQFSKR).

The protein belongs to the universal ribosomal protein uS9 family.

The chain is Small ribosomal subunit protein uS9 from Clostridium botulinum (strain ATCC 19397 / Type A).